The chain runs to 612 residues: Glutamine--fructose-6-phosphate aminotransferase [isomerizing] (612 aa).

The Nucleophile; for GATase activity role is filled by Cys2. The region spanning 2–219 (CGIVGANSTR…EGDIAIISKD (218 aa)) is the Glutamine amidotransferase type-2 domain. SIS domains are found at residues 287-427 (AKEL…LKNS) and 460-602 (ISEY…VDQP). The For Fru-6P isomerization activity role is filled by Lys607.

As to quaternary structure, homodimer.

It is found in the cytoplasm. It catalyses the reaction D-fructose 6-phosphate + L-glutamine = D-glucosamine 6-phosphate + L-glutamate. In terms of biological role, catalyzes the first step in hexosamine metabolism, converting fructose-6P into glucosamine-6P using glutamine as a nitrogen source. The polypeptide is Glutamine--fructose-6-phosphate aminotransferase [isomerizing] (Francisella tularensis subsp. tularensis (strain SCHU S4 / Schu 4)).